We begin with the raw amino-acid sequence, 90 residues long: Probable Fe(2+)-trafficking protein (90 aa).

Belongs to the Fe(2+)-trafficking protein family. Monomer.

In terms of biological role, could be a mediator in iron transactions between iron acquisition and iron-requiring processes, such as synthesis and/or repair of Fe-S clusters in biosynthetic enzymes. This chain is Probable Fe(2+)-trafficking protein, found in Yersinia enterocolitica serotype O:8 / biotype 1B (strain NCTC 13174 / 8081).